Consider the following 264-residue polypeptide: 3-methyl-2-oxobutanoate hydroxymethyltransferase (264 aa).

The Mg(2+) site is built by aspartate 45 and aspartate 84. Residues 45–46 (DS), aspartate 84, and lysine 112 each bind 3-methyl-2-oxobutanoate. Glutamate 114 contacts Mg(2+). Glutamate 181 (proton acceptor) is an active-site residue.

The protein belongs to the PanB family. In terms of assembly, homodecamer; pentamer of dimers. The cofactor is Mg(2+).

It is found in the cytoplasm. It carries out the reaction 3-methyl-2-oxobutanoate + (6R)-5,10-methylene-5,6,7,8-tetrahydrofolate + H2O = 2-dehydropantoate + (6S)-5,6,7,8-tetrahydrofolate. It functions in the pathway cofactor biosynthesis; (R)-pantothenate biosynthesis; (R)-pantoate from 3-methyl-2-oxobutanoate: step 1/2. Catalyzes the reversible reaction in which hydroxymethyl group from 5,10-methylenetetrahydrofolate is transferred onto alpha-ketoisovalerate to form ketopantoate. In Escherichia coli (strain K12 / MC4100 / BW2952), this protein is 3-methyl-2-oxobutanoate hydroxymethyltransferase.